A 326-amino-acid polypeptide reads, in one-letter code: Probable cell division protein WhiA (326 aa).

Residues 275-308 (SLDELGHYADPPMTKDAVAGRIRRLLAMADKRAS) constitute a DNA-binding region (H-T-H motif).

The protein belongs to the WhiA family.

Functionally, involved in cell division and chromosome segregation. The sequence is that of Probable cell division protein WhiA from Leifsonia xyli subsp. xyli (strain CTCB07).